The primary structure comprises 156 residues: 6,7-dimethyl-8-ribityllumazine synthase (156 aa).

5-amino-6-(D-ribitylamino)uracil is bound by residues F22, 56-58 (ALE), and 80-82 (AVI). 85–86 (DT) lines the (2S)-2-hydroxy-3-oxobutyl phosphate pocket. H88 functions as the Proton donor in the catalytic mechanism. 5-amino-6-(D-ribitylamino)uracil is bound at residue F113. R127 is a binding site for (2S)-2-hydroxy-3-oxobutyl phosphate.

The protein belongs to the DMRL synthase family.

The catalysed reaction is (2S)-2-hydroxy-3-oxobutyl phosphate + 5-amino-6-(D-ribitylamino)uracil = 6,7-dimethyl-8-(1-D-ribityl)lumazine + phosphate + 2 H2O + H(+). Its pathway is cofactor biosynthesis; riboflavin biosynthesis; riboflavin from 2-hydroxy-3-oxobutyl phosphate and 5-amino-6-(D-ribitylamino)uracil: step 1/2. Its function is as follows. Catalyzes the formation of 6,7-dimethyl-8-ribityllumazine by condensation of 5-amino-6-(D-ribitylamino)uracil with 3,4-dihydroxy-2-butanone 4-phosphate. This is the penultimate step in the biosynthesis of riboflavin. The polypeptide is 6,7-dimethyl-8-ribityllumazine synthase (Leuconostoc mesenteroides subsp. mesenteroides (strain ATCC 8293 / DSM 20343 / BCRC 11652 / CCM 1803 / JCM 6124 / NCDO 523 / NBRC 100496 / NCIMB 8023 / NCTC 12954 / NRRL B-1118 / 37Y)).